The primary structure comprises 140 residues: Ergosterol biosynthetic protein 28 homolog (140 aa).

4 helical membrane-spanning segments follow: residues 4 to 24 (FLNV…GNTL), 52 to 72 (TFGI…IDIH), 79 to 99 (ITLW…FVYG), and 105 to 125 (IGVL…LVGL).

Belongs to the ERG28 family. As to expression, ubiquitous; strongly expressed in testis and some cancer cell lines.

It is found in the endoplasmic reticulum membrane. This chain is Ergosterol biosynthetic protein 28 homolog, found in Homo sapiens (Human).